The primary structure comprises 315 residues: DNA-directed RNA polymerase subunit alpha (315 aa).

Positions methionine 1 to threonine 228 are alpha N-terminal domain (alpha-NTD). The tract at residues lysine 245 to glutamate 315 is alpha C-terminal domain (alpha-CTD).

Belongs to the RNA polymerase alpha chain family. Homodimer. The RNAP catalytic core consists of 2 alpha, 1 beta, 1 beta' and 1 omega subunit. When a sigma factor is associated with the core the holoenzyme is formed, which can initiate transcription.

It carries out the reaction RNA(n) + a ribonucleoside 5'-triphosphate = RNA(n+1) + diphosphate. Functionally, DNA-dependent RNA polymerase catalyzes the transcription of DNA into RNA using the four ribonucleoside triphosphates as substrates. This is DNA-directed RNA polymerase subunit alpha from Clostridium acetobutylicum (strain ATCC 824 / DSM 792 / JCM 1419 / IAM 19013 / LMG 5710 / NBRC 13948 / NRRL B-527 / VKM B-1787 / 2291 / W).